A 1436-amino-acid chain; its full sequence is DNA-directed RNA polymerase subunit beta (1436 aa).

The protein belongs to the RNA polymerase beta chain family. In terms of assembly, the RNAP catalytic core consists of 2 alpha, 1 beta, 1 beta' and 1 omega subunit. When a sigma factor is associated with the core the holoenzyme is formed, which can initiate transcription.

It carries out the reaction RNA(n) + a ribonucleoside 5'-triphosphate = RNA(n+1) + diphosphate. Functionally, DNA-dependent RNA polymerase catalyzes the transcription of DNA into RNA using the four ribonucleoside triphosphates as substrates. This Wolbachia pipientis protein is DNA-directed RNA polymerase subunit beta.